Consider the following 829-residue polypeptide: Leucine--tRNA ligase (829 aa).

The 'HIGH' region motif lies at 34 to 44; it reads PYPSGNIHMGH. A 'KMSKS' region motif is present at residues 591 to 595; the sequence is KMSKS. Lys594 contributes to the ATP binding site.

The protein belongs to the class-I aminoacyl-tRNA synthetase family.

The protein resides in the cytoplasm. The enzyme catalyses tRNA(Leu) + L-leucine + ATP = L-leucyl-tRNA(Leu) + AMP + diphosphate. This Ehrlichia chaffeensis (strain ATCC CRL-10679 / Arkansas) protein is Leucine--tRNA ligase.